Reading from the N-terminus, the 442-residue chain is Ribosomal protein uS12 methylthiotransferase RimO (442 aa).

The region spanning 9–119 (PRIGFVSLGC…VLSHVHQYVP (111 aa)) is the MTTase N-terminal domain. Residues Cys18, Cys54, Cys83, Cys151, Cys155, and Cys158 each coordinate [4Fe-4S] cluster. Positions 137 to 375 (LTPRHYAYLK…QLQQAISTQR (239 aa)) constitute a Radical SAM core domain. The region spanning 377-442 (QDKIGREVLV…DEYDLWGSRV (66 aa)) is the TRAM domain.

The protein belongs to the methylthiotransferase family. RimO subfamily. [4Fe-4S] cluster serves as cofactor.

The protein resides in the cytoplasm. It catalyses the reaction L-aspartate(89)-[ribosomal protein uS12]-hydrogen + (sulfur carrier)-SH + AH2 + 2 S-adenosyl-L-methionine = 3-methylsulfanyl-L-aspartate(89)-[ribosomal protein uS12]-hydrogen + (sulfur carrier)-H + 5'-deoxyadenosine + L-methionine + A + S-adenosyl-L-homocysteine + 2 H(+). In terms of biological role, catalyzes the methylthiolation of an aspartic acid residue of ribosomal protein uS12. The chain is Ribosomal protein uS12 methylthiotransferase RimO from Pectobacterium atrosepticum (strain SCRI 1043 / ATCC BAA-672) (Erwinia carotovora subsp. atroseptica).